Reading from the N-terminus, the 862-residue chain is Short transient receptor potential channel 7 (862 aa).

The tract at residues 1–21 (MLRNSTFKNMQRRHTTLREKG) is disordered. Residues 1–351 (MLRNSTFKNM…GLRQQSIAVK (351 aa)) are Cytoplasmic-facing. Positions 10–21 (MQRRHTTLREKG) are enriched in basic residues. Thr-15 is modified (phosphothreonine; by PKG/PRKG1). ANK repeat units follow at residues 42 to 71 (PEEE…TLNF), 77 to 106 (MGQN…LARV), 108 to 134 (DALL…FAQG), and 163 to 192 (HDIT…RIER). Residues 352–372 (FLAVFGVSIGLPFLAIAYWIA) traverse the membrane as a helical segment. At 373 to 383 (PCSKLGRTLRS) the chain is on the extracellular side. A helical membrane pass occupies residues 384–404 (PFMKFVAHAVSFTIFLGLLVV). Topologically, residues 405–465 (NASDRFEGVK…KEIWEEGPRE (61 aa)) are cytoplasmic. A helical membrane pass occupies residues 466–486 (YVLHLWNLLDFGMLSIFVASF). The Extracellular portion of the chain corresponds to 487–537 (TARFMAFLKATEAQLYVDQHVQDDTLHNVSLPPEVAYFTYARDKWWPSDPQ). A glycan (N-linked (GlcNAc...) asparagine) is linked at Asn-514. A helical transmembrane segment spans residues 538-558 (IISEGLYAIAVVLSFSRIAYI). Topologically, residues 559-581 (LPANESFGPLQISLGRTVKDIFK) are cytoplasmic. A helical membrane pass occupies residues 582-602 (FMVIFIMVFVAFMIGMFNLYS). Residues 603–651 (YYRGAKYNPAFTTVEESFKTLFWSIFGLSEVISVVLKYDHKFIENIGYV) lie on the Extracellular side of the membrane. The chain crosses the membrane as a helical span at residues 652–672 (LYGVYNVTMVVVLLNMLIAMI). Topologically, residues 673 to 862 (NNSYQEIEED…HLRVNKGKDI (190 aa)) are cytoplasmic.

This sequence belongs to the transient receptor (TC 1.A.4) family. STrpC subfamily. TRPC7 sub-subfamily. Interacts with MX1 and RNF24. Interacts (via ANK-repeat domains) with PRKG1. In terms of processing, phosphorylation by PRKG1 at Thr-15 negatively regulates TRPC7 activity.

The protein resides in the cell membrane. The protein localises to the nucleus envelope. It carries out the reaction Ca(2+)(in) = Ca(2+)(out). In terms of biological role, forms a receptor-activated non-selective calcium permeant cation channel. Probably is operated by a phosphatidylinositol second messenger system activated by receptor tyrosine kinases or G-protein coupled receptors. Activated by diacylglycerol (DAG). May also be activated by intracellular calcium store depletion. This is Short transient receptor potential channel 7 (TRPC7) from Homo sapiens (Human).